We begin with the raw amino-acid sequence, 919 residues long: Glutamate receptor ionotropic, kainate 3 (919 aa).

The N-terminal stretch at 1–31 is a signal peptide; it reads MTAPWRRLRSLVWEYWAGLLVCAFWIPDSRG. The Extracellular segment spans residues 32 to 563; it reads MPHVIRIGGI…VFSFLNPLSP (532 aa). Asparagine 70, asparagine 76, asparagine 278, asparagine 381, asparagine 415, asparagine 426, and asparagine 433 each carry an N-linked (GlcNAc...) asparagine glycan. Cysteines 99 and 350 form a disulfide. 3 residues coordinate L-glutamate: proline 518, threonine 520, and arginine 525. 2 N-linked (GlcNAc...) asparagine glycosylation sites follow: asparagine 548 and asparagine 551. The chain crosses the membrane as a helical span at residues 564–584; the sequence is DIWMYVLLAYLGVSCVLFVIA. Residues 585–636 lie on the Cytoplasmic side of the membrane; it reads RFSPYEWYDAHPCNPGSEVVENNFTLLNSFWFGMGSLMQQGSELMPKALSTR. Residues 637-657 form a helical membrane-spanning segment; sequence IIGGIWWFFTLIIISSYTANL. Topologically, residues 658-820 are extracellular; the sequence is AAFLTVERME…KEASALGIQK (163 aa). The L-glutamate site is built by alanine 691, threonine 692, and glutamate 739. An N-linked (GlcNAc...) asparagine glycan is attached at asparagine 752. The helical transmembrane segment at 821–841 threads the bilayer; the sequence is IGGIFIVLAAGLVLSVLVAVG. Residues 842–919 are Cytoplasmic-facing; that stretch reads EFVYKLRKTA…CSTSLAPVFP (78 aa). Serine 869 is modified (phosphoserine). Lysine 887 participates in a covalent cross-link: Glycyl lysine isopeptide (Lys-Gly) (interchain with G-Cter in SUMO1).

It belongs to the glutamate-gated ion channel (TC 1.A.10.1) family. GRIK3 subfamily. Homotetramer, and heterotetramer with either GRIK4 or GRIK5. Can form functional heteromeric receptors with GRIK2. Interacts with PRKCABP. Interacts with NETO2.

The protein localises to the cell membrane. The protein resides in the postsynaptic cell membrane. The catalysed reaction is Ca(2+)(in) = Ca(2+)(out). Its function is as follows. Ionotropic glutamate receptor that functions as a cation-permeable ligand-gated ion channel, gated by L-glutamate and the glutamatergic agonist kainic acid. Binding of the excitatory neurotransmitter L-glutamate induces a conformation change, leading to the opening of the cation channel, and thereby converts the chemical signal to an electrical impulse. The receptor then desensitizes rapidly and enters a transient inactive state, characterized by the presence of bound agonist. In association with GRIK2, involved in presynaptic facilitation of glutamate release at hippocampal mossy fiber synapses. The chain is Glutamate receptor ionotropic, kainate 3 (GRIK3) from Macaca fascicularis (Crab-eating macaque).